Consider the following 425-residue polypeptide: Decarboxylase flvG (425 aa).

Position 82 is an N6-(pyridoxal phosphate)lysine (lysine 82). Residues serine 213, glycine 250, and glutamate 281–arginine 284 contribute to the pyridoxal 5'-phosphate site. Residue phenylalanine 331–glutamate 332 coordinates substrate. The Proton donor; shared with dimeric partner role is filled by cysteine 365. Aspartate 366 is a binding site for substrate. Position 395 (tyrosine 395) interacts with pyridoxal 5'-phosphate.

The protein belongs to the Orn/Lys/Arg decarboxylase class-II family. Homodimer. Only the dimer is catalytically active, as the active sites are constructed of residues from both monomers. It depends on pyridoxal 5'-phosphate as a cofactor.

The protein resides in the cytoplasm. The enzyme catalyses N(6),N(6)-dimethyl-L-lysine + H(+) = N,N-dimethyl-cadaverine + CO2. The protein operates within secondary metabolite biosynthesis; terpenoid biosynthesis. In terms of biological role, decarboxylase; part of the gene cluster that mediates the biosynthesis of flavunoidine, an alkaloidal terpenoid with a tetracyclic cage-like core connected to dimethylcadaverine via a C-N bond and acylated with 5,5-dimethyl-L-pipecolate. The tetracyclic core is synthesized by the terpene cyclase flvE and the cytochrome P450 monooxygenase flvD. The terpene cyclase flvE catalyzes the cyclization of farnesyl pyrophosphate (FPP) to form (1R,4R,5S)-(+)-acoradiene and the cytochrome P450 monooxygenase flvD is then responsible for oxidative conversion of (1R,4R,5S)-(+)-acoradiene into the tetracyclic cage present in the final product flavunoidine. In parallel, the N-methyltransferase flvH dimethylates L-lysine to give N,N-dimethyl-L-Lysin which is decarboxylated by flvG to afford dimethylcadaverine. The terpene cyclase-like protein flvF is the enzyme that attaches the dimethylcadaverine precusor at the C-7 of the tetracyclic cage to yield pre-flavunoidine. The cytochrome monooxygenase flvC hydroxylates the C-10 position of pre-flavunoidine whereas the NRPS flvI acylates the terpenoid core at the hydroxylated C-10 with dimethylpipecolate to yield final flavunoidine. The bifunctional enzyme flvA and the dehydrogenase flvB are responsible for the synthesis of the dimethylpipecolate precursor. The PLP-dependent lyase domain of flvA might use L-O-acetyl-homoserine and alpha-keto-isovalerate to form an intermediary ketone that can cyclize intramolecularly to yield an imine. The imine can be reduced by flvB to yield the 6-carboxylated pipecolate. The C-terminal alpha-KG-dependent oxygenase domain of flvA is then proposed to catalyze the decarboxylation to yield dimethylpipecolate. This is Decarboxylase flvG from Aspergillus flavus (strain ATCC 200026 / FGSC A1120 / IAM 13836 / NRRL 3357 / JCM 12722 / SRRC 167).